Here is a 246-residue protein sequence, read N- to C-terminus: 5-oxoprolinase subunit A (246 aa).

The protein belongs to the LamB/PxpA family. In terms of assembly, forms a complex composed of PxpA, PxpB and PxpC.

It catalyses the reaction 5-oxo-L-proline + ATP + 2 H2O = L-glutamate + ADP + phosphate + H(+). Its function is as follows. Catalyzes the cleavage of 5-oxoproline to form L-glutamate coupled to the hydrolysis of ATP to ADP and inorganic phosphate. In Vibrio cholerae serotype O1 (strain M66-2), this protein is 5-oxoprolinase subunit A.